A 212-amino-acid polypeptide reads, in one-letter code: Deoxyribose-phosphate aldolase (212 aa).

Catalysis depends on aspartate 89, which acts as the Proton donor/acceptor. Lysine 151 (schiff-base intermediate with acetaldehyde) is an active-site residue. The active-site Proton donor/acceptor is the lysine 180.

The protein belongs to the DeoC/FbaB aldolase family. DeoC type 1 subfamily.

It is found in the cytoplasm. The catalysed reaction is 2-deoxy-D-ribose 5-phosphate = D-glyceraldehyde 3-phosphate + acetaldehyde. It functions in the pathway carbohydrate degradation; 2-deoxy-D-ribose 1-phosphate degradation; D-glyceraldehyde 3-phosphate and acetaldehyde from 2-deoxy-alpha-D-ribose 1-phosphate: step 2/2. Catalyzes a reversible aldol reaction between acetaldehyde and D-glyceraldehyde 3-phosphate to generate 2-deoxy-D-ribose 5-phosphate. This chain is Deoxyribose-phosphate aldolase, found in Clostridium botulinum (strain ATCC 19397 / Type A).